The sequence spans 152 residues: Nucleoside diphosphate kinase (152 aa).

ATP-binding residues include lysine 11, phenylalanine 59, arginine 87, threonine 93, arginine 104, and asparagine 114. Residue histidine 117 is the Pros-phosphohistidine intermediate of the active site.

This sequence belongs to the NDK family. Homotetramer. It depends on Mg(2+) as a cofactor.

It localises to the cytoplasm. It carries out the reaction a 2'-deoxyribonucleoside 5'-diphosphate + ATP = a 2'-deoxyribonucleoside 5'-triphosphate + ADP. The enzyme catalyses a ribonucleoside 5'-diphosphate + ATP = a ribonucleoside 5'-triphosphate + ADP. Major role in the synthesis of nucleoside triphosphates other than ATP. The ATP gamma phosphate is transferred to the NDP beta phosphate via a ping-pong mechanism, using a phosphorylated active-site intermediate. This Prochlorococcus marinus (strain MIT 9312) protein is Nucleoside diphosphate kinase.